Here is a 235-residue protein sequence, read N- to C-terminus: Large ribosomal subunit protein uL1 (235 aa).

The protein belongs to the universal ribosomal protein uL1 family. Part of the 50S ribosomal subunit.

Functionally, binds directly to 23S rRNA. The L1 stalk is quite mobile in the ribosome, and is involved in E site tRNA release. In terms of biological role, protein L1 is also a translational repressor protein, it controls the translation of the L11 operon by binding to its mRNA. In Mycolicibacterium vanbaalenii (strain DSM 7251 / JCM 13017 / BCRC 16820 / KCTC 9966 / NRRL B-24157 / PYR-1) (Mycobacterium vanbaalenii), this protein is Large ribosomal subunit protein uL1.